A 202-amino-acid polypeptide reads, in one-letter code: LexA repressor (202 aa).

The segment at residues 28–48 (RAEIAQQLGFRSPNAAEEHLK) is a DNA-binding region (H-T-H motif). Active-site for autocatalytic cleavage activity residues include Ser-119 and Lys-156.

Belongs to the peptidase S24 family. Homodimer.

It carries out the reaction Hydrolysis of Ala-|-Gly bond in repressor LexA.. In terms of biological role, represses a number of genes involved in the response to DNA damage (SOS response), including recA and lexA. Binds to the 16 bp palindromic sequence 5'-CTGTATATATATACAG-3'. In the presence of single-stranded DNA, RecA interacts with LexA causing an autocatalytic cleavage which disrupts the DNA-binding part of LexA, leading to derepression of the SOS regulon and eventually DNA repair. The sequence is that of LexA repressor from Pectobacterium carotovorum subsp. carotovorum (Erwinia carotovora subsp. carotovora).